The following is a 374-amino-acid chain: Queuine tRNA-ribosyltransferase (374 aa).

Catalysis depends on aspartate 95, which acts as the Proton acceptor. Residues 95–99 (DSGGF), aspartate 149, glutamine 191, and glycine 218 contribute to the substrate site. The interval 249–255 (GVGTYRE) is RNA binding. Aspartate 268 acts as the Nucleophile in catalysis. The tract at residues 273 to 277 (TRWAR) is RNA binding; important for wobble base 34 recognition. Cysteine 306, cysteine 308, cysteine 311, and histidine 337 together coordinate Zn(2+).

This sequence belongs to the queuine tRNA-ribosyltransferase family. In terms of assembly, homodimer. Within each dimer, one monomer is responsible for RNA recognition and catalysis, while the other monomer binds to the replacement base PreQ1. The cofactor is Zn(2+).

It catalyses the reaction 7-aminomethyl-7-carbaguanine + guanosine(34) in tRNA = 7-aminomethyl-7-carbaguanosine(34) in tRNA + guanine. It participates in tRNA modification; tRNA-queuosine biosynthesis. Functionally, catalyzes the base-exchange of a guanine (G) residue with the queuine precursor 7-aminomethyl-7-deazaguanine (PreQ1) at position 34 (anticodon wobble position) in tRNAs with GU(N) anticodons (tRNA-Asp, -Asn, -His and -Tyr). Catalysis occurs through a double-displacement mechanism. The nucleophile active site attacks the C1' of nucleotide 34 to detach the guanine base from the RNA, forming a covalent enzyme-RNA intermediate. The proton acceptor active site deprotonates the incoming PreQ1, allowing a nucleophilic attack on the C1' of the ribose to form the product. After dissociation, two additional enzymatic reactions on the tRNA convert PreQ1 to queuine (Q), resulting in the hypermodified nucleoside queuosine (7-(((4,5-cis-dihydroxy-2-cyclopenten-1-yl)amino)methyl)-7-deazaguanosine). The sequence is that of Queuine tRNA-ribosyltransferase from Nostoc sp. (strain PCC 7120 / SAG 25.82 / UTEX 2576).